The primary structure comprises 369 residues: Cobalt-precorrin-5B C(1)-methyltransferase (369 aa).

This sequence belongs to the CbiD family.

It carries out the reaction Co-precorrin-5B + S-adenosyl-L-methionine = Co-precorrin-6A + S-adenosyl-L-homocysteine. It participates in cofactor biosynthesis; adenosylcobalamin biosynthesis; cob(II)yrinate a,c-diamide from sirohydrochlorin (anaerobic route): step 6/10. In terms of biological role, catalyzes the methylation of C-1 in cobalt-precorrin-5B to form cobalt-precorrin-6A. The polypeptide is Cobalt-precorrin-5B C(1)-methyltransferase (Geobacter metallireducens (strain ATCC 53774 / DSM 7210 / GS-15)).